The primary structure comprises 429 residues: Enolase (429 aa).

Residue Q163 coordinates (2R)-2-phosphoglycerate. The Proton donor role is filled by E205. Mg(2+) contacts are provided by D242, E286, and D313. Residues K338, R367, S368, and K389 each contribute to the (2R)-2-phosphoglycerate site. The active-site Proton acceptor is the K338.

Belongs to the enolase family. The cofactor is Mg(2+).

It localises to the cytoplasm. The protein localises to the secreted. The protein resides in the cell surface. It catalyses the reaction (2R)-2-phosphoglycerate = phosphoenolpyruvate + H2O. Its pathway is carbohydrate degradation; glycolysis; pyruvate from D-glyceraldehyde 3-phosphate: step 4/5. Catalyzes the reversible conversion of 2-phosphoglycerate (2-PG) into phosphoenolpyruvate (PEP). It is essential for the degradation of carbohydrates via glycolysis. This chain is Enolase, found in Thermoanaerobacter pseudethanolicus (strain ATCC 33223 / 39E) (Clostridium thermohydrosulfuricum).